A 318-amino-acid polypeptide reads, in one-letter code: NADH-ubiquinone oxidoreductase chain 1 (318 aa).

8 helical membrane passes run 3 to 23 (FVNL…LTLL), 68 to 88 (LILF…MWIP), 102 to 122 (ILFM…SGWA), 146 to 166 (LAII…STLI), 171 to 191 (HIWL…STLA), 222 to 242 (LFFL…TILF), 253 to 273 (EMYT…FLWI), and 294 to 314 (LPLT…LASI).

It belongs to the complex I subunit 1 family.

Its subcellular location is the mitochondrion inner membrane. The enzyme catalyses a ubiquinone + NADH + 5 H(+)(in) = a ubiquinol + NAD(+) + 4 H(+)(out). Its function is as follows. Core subunit of the mitochondrial membrane respiratory chain NADH dehydrogenase (Complex I) that is believed to belong to the minimal assembly required for catalysis. Complex I functions in the transfer of electrons from NADH to the respiratory chain. The immediate electron acceptor for the enzyme is believed to be ubiquinone. This Nyctalus plancyi velutinus (Fine-haired noctule) protein is NADH-ubiquinone oxidoreductase chain 1 (MT-ND1).